The following is a 920-amino-acid chain: Androgen receptor (920 aa).

The interval 1-559 is modulating; it reads MEVQLGLGRV…IDYYFPPQKT (559 aa). The segment at 1–587 is interaction with ZNF318; the sequence is MEVQLGLGRV…GSCKVFFKRA (587 aa). Disordered regions lie at residues 36–167 and 195–228; these read NPGP…LSLL and QQQQQEAVSEGSSSGRAREASGAPTSSKDNYLGG. Over residues 44 to 91 the composition is skewed to low complexity; that stretch reads AASAAPPGASLLLLQQQQQQQQQQQQQQQQQQQQQQQETSPRQQQQQQ. Position 83 is a phosphoserine; by CDK9 (Ser-83). Ser-96 carries the post-translational modification Phosphoserine. Residues 195–217 show a composition bias toward low complexity; that stretch reads QQQQQEAVSEGSSSGRAREASGA. Polar residues predominate over residues 218–228; the sequence is PTSSKDNYLGG. Tyr-225 carries the post-translational modification Phosphotyrosine; by CSK. At Ser-258 the chain carries Phosphoserine. Phosphotyrosine; by CSK and TNK2 is present on Tyr-269. A phosphotyrosine; by CSK mark is found at Tyr-309, Tyr-348, Tyr-359, and Tyr-364. The residue at position 365 (Tyr-365) is a Phosphotyrosine; by CSK and TNK2. Lys-388 is covalently cross-linked (Glycyl lysine isopeptide (Lys-Gly) (interchain with G-Cter in SUMO)). Tyr-395 bears the Phosphotyrosine; by CSK mark. A Glycyl lysine isopeptide (Lys-Gly) (interchain with G-Cter in SUMO) cross-link involves residue Lys-521. Tyr-535 and Tyr-552 each carry phosphotyrosine; by CSK. The interval 552–919 is interaction with LPXN; the sequence is YYFPPQKTCL…GKVKPIYFHT (368 aa). 2 NR C4-type zinc fingers span residues 560–580 and 596–620; these read CLICGDEASGCHYGALTCGSC and CASRNDCTIDKFRRKNCPSCRLRKC. Residues 560-632 constitute a DNA-binding region (nuclear receptor); the sequence is CLICGDEASG…AGMTLGARKL (73 aa). The interaction with HIPK3 stretch occupies residues 572-662; that stretch reads YGALTCGSCK…TEETTQKLTV (91 aa). Positions 592–919 are interaction with CCAR1; the sequence is QKYLCASRND…GKVKPIYFHT (328 aa). Residues 625–919 are interaction with KAT7; the sequence is MTLGARKLKK…GKVKPIYFHT (295 aa). Ser-651 is subject to Phosphoserine; by STK4/MST1. The 232-residue stretch at 669–900 folds into the NR LBD domain; that stretch reads ECQPIFLNVL…DFPEMMAEII (232 aa). The 17beta-hydroxy-5alpha-androstan-3-one site is built by Asn-706 and Arg-753. Residues Lys-846 and Lys-848 each participate in a glycyl lysine isopeptide (Lys-Gly) (interchain with G-Cter in ubiquitin) cross-link. Residue Thr-878 participates in 17beta-hydroxy-5alpha-androstan-3-one binding. Tyr-916 bears the Phosphotyrosine; by CSK mark.

The protein belongs to the nuclear hormone receptor family. NR3 subfamily. As to quaternary structure, binds DNA as a homodimer. Part of a ternary complex containing AR, EFCAB6/DJBP and PARK7. Interacts with HIPK3 and NR0B2 in the presence of androgen. The ligand binding domain interacts with KAT7/HBO1 in the presence of dihydrotestosterone. Interacts with EFCAB6/DJBP, PQBP1, RANBP9, RBAK, SPDEF, SRA1, TGFB1I1 and RREB1. Interacts with ZMIZ1/ZIMP10 and ZMIZ2/ZMIP7 which both enhance its transactivation activity. Interacts with SLC30A9 and RAD54L2/ARIP4. Interacts with MACROD1 (via macro domain). Interacts via the ligand-binding domain with LXXLL and FXXLF motifs from NCOA1, NCOA2, NCOA3 and MAGEA11. Interacts (via nuclear receptor DNA binding domain and nuclear receptor ligand binding domain) with NCOA4. The AR N-terminal poly-Gln region binds Ran resulting in enhancement of AR-mediated transactivation. Ran-binding decreases as the poly-Gln length increases. Interacts with HIP1 (via coiled coil domain). Interacts (via ligand-binding domain) with TRIM68. Interacts with TNK2. Interacts with USP26. Interacts with RNF6. Interacts (regulated by RNF6 probably through polyubiquitination) with RNF14; regulates AR transcriptional activity. Interacts with PRMT2 and TRIM24. Interacts with RACK1. Interacts with RANBP10; this interaction enhances dihydrotestosterone-induced AR transcriptional activity. Interacts with PRPF6 in a hormone-independent way; this interaction enhances dihydrotestosterone-induced AR transcriptional activity. Interacts with STK4/MST1. Interacts with ZIPK/DAPK3. Interacts with LPXN. Interacts with MAK. Part of a complex containing AR, MAK and NCOA3. Interacts with CRY1. Interacts with CCAR1 and GATA2. Interacts with ZNF318. Interacts with BUD31. Interacts with ARID4A. Interacts with ARID4B. Interacts (via NR LBD domain) with ZBTB7A; the interaction is direct and androgen-dependent. Interacts with NCOR1. Interacts with NCOR2. Interacts with CRY2 in a ligand-dependent manner. Post-translationally, sumoylated on Lys-388 (major) and Lys-521. Ubiquitinated. Deubiquitinated by USP26. 'Lys-6' and 'Lys-27'-linked polyubiquitination by RNF6 modulates AR transcriptional activity and specificity. In terms of processing, phosphorylated in prostate cancer cells in response to several growth factors including EGF. Phosphorylation is induced by c-Src kinase (CSK). Tyr-535 is one of the major phosphorylation sites and an increase in phosphorylation and Src kinase activity is associated with prostate cancer progression. Phosphorylation by TNK2 enhances the DNA-binding and transcriptional activity and may be responsible for androgen-independent progression of prostate cancer. Phosphorylation at Ser-83 by CDK9 regulates AR promoter selectivity and cell growth. Phosphorylation by PAK6 leads to AR-mediated transcription inhibition. Palmitoylated by ZDHHC7 and ZDHHC21. Palmitoylation is required for plasma membrane targeting and for rapid intracellular signaling via ERK and AKT kinases and cAMP generation. In terms of tissue distribution, mainly expressed in heart and skeletal muscle. Expressed in basal and stromal cells of the prostate (at protein level).

It is found in the nucleus. It localises to the cytoplasm. AIM-100 (4-amino-5,6-biaryl-furo[2,3-d]pyrimidine) suppresses TNK2-mediated phosphorylation at Tyr-269. Inhibits the binding of the Tyr-269 phosphorylated form to androgen-responsive enhancers (AREs) and its transcriptional activity. Steroid hormone receptors are ligand-activated transcription factors that regulate eukaryotic gene expression and affect cellular proliferation and differentiation in target tissues. Transcription factor activity is modulated by bound coactivator and corepressor proteins like ZBTB7A that recruits NCOR1 and NCOR2 to the androgen response elements/ARE on target genes, negatively regulating androgen receptor signaling and androgen-induced cell proliferation. Transcription activation is also down-regulated by NR0B2. Activated, but not phosphorylated, by HIPK3 and ZIPK/DAPK3. In terms of biological role, lacks the C-terminal ligand-binding domain and may therefore constitutively activate the transcription of a specific set of genes independently of steroid hormones. The polypeptide is Androgen receptor (AR) (Homo sapiens (Human)).